Here is a 673-residue protein sequence, read N- to C-terminus: tRNA 5-methylaminomethyl-2-thiouridine biosynthesis bifunctional protein MnmC (673 aa).

The interval Met1–Pro245 is tRNA (mnm(5)s(2)U34)-methyltransferase. Residues Ile272–Val673 form an FAD-dependent cmnm(5)s(2)U34 oxidoreductase region.

In the N-terminal section; belongs to the methyltransferase superfamily. tRNA (mnm(5)s(2)U34)-methyltransferase family. The protein in the C-terminal section; belongs to the DAO family. It depends on FAD as a cofactor.

The protein resides in the cytoplasm. It carries out the reaction 5-aminomethyl-2-thiouridine(34) in tRNA + S-adenosyl-L-methionine = 5-methylaminomethyl-2-thiouridine(34) in tRNA + S-adenosyl-L-homocysteine + H(+). Its function is as follows. Catalyzes the last two steps in the biosynthesis of 5-methylaminomethyl-2-thiouridine (mnm(5)s(2)U) at the wobble position (U34) in tRNA. Catalyzes the FAD-dependent demodification of cmnm(5)s(2)U34 to nm(5)s(2)U34, followed by the transfer of a methyl group from S-adenosyl-L-methionine to nm(5)s(2)U34, to form mnm(5)s(2)U34. This Serratia proteamaculans (strain 568) protein is tRNA 5-methylaminomethyl-2-thiouridine biosynthesis bifunctional protein MnmC.